Consider the following 699-residue polypeptide: Ribosomal RNA large subunit methyltransferase K/L (699 aa).

The THUMP domain maps to 44-155 (DAYKLCLWSR…RDNVILGIDL (112 aa)).

It belongs to the methyltransferase superfamily. RlmKL family.

Its subcellular location is the cytoplasm. It catalyses the reaction guanosine(2445) in 23S rRNA + S-adenosyl-L-methionine = N(2)-methylguanosine(2445) in 23S rRNA + S-adenosyl-L-homocysteine + H(+). The catalysed reaction is guanosine(2069) in 23S rRNA + S-adenosyl-L-methionine = N(2)-methylguanosine(2069) in 23S rRNA + S-adenosyl-L-homocysteine + H(+). Specifically methylates the guanine in position 2445 (m2G2445) and the guanine in position 2069 (m7G2069) of 23S rRNA. In Alteromonas mediterranea (strain DSM 17117 / CIP 110805 / LMG 28347 / Deep ecotype), this protein is Ribosomal RNA large subunit methyltransferase K/L.